A 351-amino-acid chain; its full sequence is Protein Maqu_2141 (351 aa).

Belongs to the proline racemase family.

In terms of biological role, displays neither proline racemase activity nor trans-4-hydroxy-L-proline (t4LHyp) epimerase activity nor t3LHyp dehydratase activity. The chain is Protein Maqu_2141 from Marinobacter nauticus (strain ATCC 700491 / DSM 11845 / VT8) (Marinobacter aquaeolei).